The chain runs to 358 residues: Na(+)/H(+) exchange regulatory cofactor NHE-RF1 (358 aa).

N-acetylserine is present on serine 2. A phosphoserine mark is found at serine 2 and serine 46. The region spanning 14–94 (LCCLEKGPNG…AVRLLVVDPE (81 aa)) is the PDZ 1 domain. Residues 114-134 (QETPGQAEPAAAAEAQGAGNE) show a composition bias toward low complexity. Disordered regions lie at residues 114–192 (QETP…EASG) and 269–358 (SREA…FSNL). A compositionally biased stretch (basic and acidic residues) spans 135 to 149 (NEPREADKSHPEQRK). The 81-residue stretch at 154–234 (LCTMKKGPSG…ETKLLVVDRE (81 aa)) folds into the PDZ 2 domain. Residues serine 162, serine 269, serine 280, serine 290, and serine 291 each carry the phosphoserine modification. Positions 287–306 (RSASSDTSEELNSQDSPPKQ) are enriched in polar residues. Phosphothreonine is present on threonine 293. 3 positions are modified to phosphoserine: serine 294, serine 299, and serine 302. Residues 307–319 (DSTAPSSTSSSDP) are compositionally biased toward low complexity. Residues 348 to 358 (WSKKNELFSNL) show a composition bias toward basic and acidic residues.

Homodimer, and heterodimer with NHERF2. Binds the N-termini of EZR, RDX and MSN. Binds the C-termini of PDGFRA, PDGFRB, ADRB2, NOS2 and CFTR. Binds ARHGAP17, EPI64, RACK1, OPRK1, GNAQ, CTNNB1 and PLCB3. Binds PDZK1. Interacts with CLCN3. Binds the C-terminus of PAG1. In resting T-cells, part of a PAG1-NHERF1-MSN complex which is disrupted upon TCR activation. Forms a complex with CFTR and SLC4A7. Forms a complex with SLC4A7 and ATP6V1B1. Interacts with TRPC4 (via the PDZ-binding domain). Directly interacts with HTR4. Interacts (via the PDZ 1 domain) with PODXL (via the C-terminal PDZ-binding motif DTHL); interaction is not detected in glomerular epithelium cells. Interacts (via the PDZ 1 domain) with PODXL (via the C-terminal PDZ-binding motif DTHL); the interaction take place early in the secretory pathway and is necessary for its apical membrane sorting. Interacts with SLC26A3. Interacts with MCC. Interacts with SLC34A1. Interacts (via the PDZ domains) with SLC26A6 isoform 4 and isoform 5. Interacts (via PDZ domains) with ACE2 (via PDZ-binding motif); the interaction may enhance ACE2 membrane residence. Post-translationally, phosphorylated on serine residues.

Its subcellular location is the cytoplasm. It is found in the apical cell membrane. The protein localises to the endomembrane system. The protein resides in the cell projection. It localises to the filopodium. Its subcellular location is the ruffle. It is found in the microvillus. Functionally, scaffold protein that connects plasma membrane proteins with members of the ezrin/moesin/radixin family and thereby helps to link them to the actin cytoskeleton and to regulate their surface expression. Necessary for recycling of internalized ADRB2. Was first known to play a role in the regulation of the activity and subcellular location of SLC9A3. Necessary for cAMP-mediated phosphorylation and inhibition of SLC9A3. Involved in sperm capacitation. May participate in the regulation of the chloride and bicarbonate homeostasis in spermatozoa. May enhance Wnt signaling. May participate in HTR4 targeting to microvilli. Involved in the regulation of phosphate reabsorption in the renal proximal tubules. In Macaca fascicularis (Crab-eating macaque), this protein is Na(+)/H(+) exchange regulatory cofactor NHE-RF1 (NHERF1).